Here is a 1301-residue protein sequence, read N- to C-terminus: DNA-directed RNA polymerase subunit beta (1301 aa).

This sequence belongs to the RNA polymerase beta chain family. In terms of assembly, in plastids the minimal PEP RNA polymerase catalytic core is composed of four subunits: alpha, beta, beta', and beta''. When a (nuclear-encoded) sigma factor is associated with the core the holoenzyme is formed, which can initiate transcription.

Its subcellular location is the plastid. The protein resides in the chloroplast. It catalyses the reaction RNA(n) + a ribonucleoside 5'-triphosphate = RNA(n+1) + diphosphate. Its function is as follows. DNA-dependent RNA polymerase catalyzes the transcription of DNA into RNA using the four ribonucleoside triphosphates as substrates. The protein is DNA-directed RNA polymerase subunit beta of Chlorella vulgaris (Green alga).